The primary structure comprises 332 residues: Cyclin-dependent kinase 1 (332 aa).

The region spanning 22–312 (FTKLEKIGEG…AKKALVHPYF (291 aa)) is the Protein kinase domain. Residues 28 to 36 (IGEGTYGVV) and lysine 51 contribute to the ATP site. Residue threonine 32 is modified to Phosphothreonine. Tyrosine 33 is modified (phosphotyrosine). The active-site Proton acceptor is aspartate 146.

This sequence belongs to the protein kinase superfamily. CMGC Ser/Thr protein kinase family. CDC2/CDKX subfamily. Forms a stable but non-covalent complex with a regulatory subunit and with a cyclin. Interacts with cks-1. Post-translationally, phosphorylated.

The protein resides in the nucleus. The protein localises to the cytoplasm. It is found in the cytoskeleton. Its subcellular location is the microtubule organizing center. It localises to the centrosome. The protein resides in the chromosome. The catalysed reaction is L-seryl-[protein] + ATP = O-phospho-L-seryl-[protein] + ADP + H(+). It catalyses the reaction L-threonyl-[protein] + ATP = O-phospho-L-threonyl-[protein] + ADP + H(+). It carries out the reaction [DNA-directed RNA polymerase] + ATP = phospho-[DNA-directed RNA polymerase] + ADP + H(+). With respect to regulation, phosphorylation both activates and inactivates the enzyme depending on the site of phosphorylation. Its function is as follows. Plays a key role in the control of the eukaryotic cell cycle. Required for entry into S-phase and mitosis. Acts as a component of the kinase complex that phosphorylates the repetitive C-terminus of RNA polymerase II. May function in concert with npp-16 to arrest prophase blastomeres in response to anoxia. The polypeptide is Cyclin-dependent kinase 1 (cdk-1) (Caenorhabditis elegans).